The primary structure comprises 345 residues: uncharacterized protein (345 aa).

This sequence belongs to the methyltransferase superfamily.

This is an uncharacterized protein from Streptomyces fradiae (Streptomyces roseoflavus).